Consider the following 297-residue polypeptide: Homoserine kinase (297 aa).

82 to 92 contacts ATP; that stretch reads PLTRGLGSSAS.

This sequence belongs to the GHMP kinase family. Homoserine kinase subfamily.

It is found in the cytoplasm. It carries out the reaction L-homoserine + ATP = O-phospho-L-homoserine + ADP + H(+). It functions in the pathway amino-acid biosynthesis; L-threonine biosynthesis; L-threonine from L-aspartate: step 4/5. Its function is as follows. Catalyzes the ATP-dependent phosphorylation of L-homoserine to L-homoserine phosphate. This chain is Homoserine kinase, found in Bacillus anthracis (strain CDC 684 / NRRL 3495).